Consider the following 391-residue polypeptide: D-xylose 1-dehydrogenase (NADP(+)) (391 aa).

Belongs to the Gfo/Idh/MocA family.

The enzyme catalyses D-xylose + NADP(+) = D-xylono-1,5-lactone + NADPH + H(+). NADP-dependent D-xylose dehydrogenase catalyzing the oxydation of D-xylose into D-xylonolactone. Also displays some, albeit lower activity with D-glucose, D-galactose and L-arabinose as substrate. Probably not involved in D-xylose degradation, as it has been shown that H.jecorina assimilates D-xylose via D-xylose reductase and xylitol dehydrogenase, and it is unable to grow on D-xylonic acid as sole carbon source. May play a role in the regeneration of NADP(+) in the presence of D-xylose. The polypeptide is D-xylose 1-dehydrogenase (NADP(+)) (Hypocrea jecorina (strain ATCC 56765 / BCRC 32924 / NRRL 11460 / Rut C-30) (Trichoderma reesei)).